Here is a 431-residue protein sequence, read N- to C-terminus: MNIAVIGLSHKTAPVEVREKLSLPETEIQNAISELCSGTYTQEVGILSTCNRLEIYVVTNEMQPGIREVTQFLSESSKIPLNQLRPHLFMLLHEDSIMHLMRVASGLDSLVLGEGQILAQVKQTHKLGQKYKGIGRILNRLFKQAVTAGKRVRTETSIGTGAVSVSSAAVELAQMKLEDLSNYQVAIVGAGKMSKLLVQHLLAKGANKISIINRSVGRAQDLANSFKDANIKVYSMLEMVQVIGESDLVFTSTAATELILDKAKLETILDPLKPLMLVDISVPRNIGNDVSELPNVRCFNVDDLKAVVAQNRESRRQMAMEAEVLLEEEVEAFDVWWKSLETVPTINSLRQKIETIREQELEKALSRLGSEFAEKHQEVIEALTRGIVNKILHDPMVQLRAQQDIEARRHAMETLQLLFNLESEMSSGKVI.

Residues 49–52 (TCNR), Ser109, 114–116 (EGQ), and Gln120 contribute to the substrate site. The active-site Nucleophile is Cys50. 189–194 (GAGKMS) contributes to the NADP(+) binding site.

This sequence belongs to the glutamyl-tRNA reductase family. As to quaternary structure, homodimer.

The enzyme catalyses (S)-4-amino-5-oxopentanoate + tRNA(Glu) + NADP(+) = L-glutamyl-tRNA(Glu) + NADPH + H(+). It participates in porphyrin-containing compound metabolism; protoporphyrin-IX biosynthesis; 5-aminolevulinate from L-glutamyl-tRNA(Glu): step 1/2. The protein operates within porphyrin-containing compound metabolism; chlorophyll biosynthesis. In terms of biological role, catalyzes the NADPH-dependent reduction of glutamyl-tRNA(Glu) to glutamate 1-semialdehyde (GSA). This is Glutamyl-tRNA reductase from Trichodesmium erythraeum (strain IMS101).